A 442-amino-acid chain; its full sequence is GTPase Der (442 aa).

2 EngA-type G domains span residues 3 to 167 (PTIV…PADD) and 177 to 350 (PRVA…AAAM). GTP is bound by residues 9–16 (GRPNVGKS), 56–60 (DTAGF), 119–122 (NKAE), 183–190 (GRPNVGKS), 230–234 (DTAGL), and 295–298 (NKWD). One can recognise a KH-like domain in the interval 351–435 (SNLSTPRLTR…PLRIQFRTAH (85 aa)).

It belongs to the TRAFAC class TrmE-Era-EngA-EngB-Septin-like GTPase superfamily. EngA (Der) GTPase family. Associates with the 50S ribosomal subunit.

Its function is as follows. GTPase that plays an essential role in the late steps of ribosome biogenesis. In Azoarcus sp. (strain BH72), this protein is GTPase Der.